The primary structure comprises 143 residues: MTLERTLSIIKPDAVGNNHIGEIIARFEKAGLRIVAAKMKQLDRKDAEGFYAVHKGRPFFEDLVGFMTTGPVMIMVLEGENAINKNREIMGATDPKKAAPGTIRADFAQTIDENAVHGSDAAETAKTEIEYFFKSQDVCARKR.

Residues Lys-11, Phe-59, Arg-87, Thr-93, Arg-104, and Asn-114 each contribute to the ATP site. The active-site Pros-phosphohistidine intermediate is the His-117.

The protein belongs to the NDK family. In terms of assembly, homotetramer. The cofactor is Mg(2+).

It is found in the cytoplasm. It catalyses the reaction a 2'-deoxyribonucleoside 5'-diphosphate + ATP = a 2'-deoxyribonucleoside 5'-triphosphate + ADP. The enzyme catalyses a ribonucleoside 5'-diphosphate + ATP = a ribonucleoside 5'-triphosphate + ADP. Its function is as follows. Major role in the synthesis of nucleoside triphosphates other than ATP. The ATP gamma phosphate is transferred to the NDP beta phosphate via a ping-pong mechanism, using a phosphorylated active-site intermediate. This Protochlamydia amoebophila (strain UWE25) protein is Nucleoside diphosphate kinase 2.